The chain runs to 224 residues: Thiamine-triphosphatase (224 aa).

Ala2 bears the N-acetylalanine mark. The 197-residue stretch at 5–201 (LIEVERKFTP…AKLLVYLQRF (197 aa)) folds into the CYTH domain. Residues Glu7 and Glu9 each coordinate Mg(2+). The substrate site is built by Lys11, Arg55, Arg57, Lys65, and Arg125. Mg(2+)-binding residues include Asp145, Glu157, and Glu159. Glu157 serves as a coordination point for substrate. Lys193 is a substrate binding site.

This sequence belongs to the ThTPase family. In terms of assembly, monomer. The cofactor is Mg(2+).

Its subcellular location is the cytoplasm. The enzyme catalyses thiamine triphosphate + H2O = thiamine diphosphate + phosphate + H(+). Hydrolase highly specific for thiamine triphosphate (ThTP). The chain is Thiamine-triphosphatase (Thtpa) from Rattus norvegicus (Rat).